Reading from the N-terminus, the 272-residue chain is MSKHELSLVEVTHYTDPEVLAIVKDFHVRGNFASLPEFAERTFVSAVPLAHLEKFENKEVLFRPGFSSVINISSSHNFSRERLPSGINFCDKNKLSIRTIEKLLVNAFSSPDPGSVRRPYPSGGALYPIEVFLCRLSENTENWQAGTNVYHYLPLSQALEPVATCNTQSLYRSLSGGDSERLGKPHFALVYCIIFEKALFKYRYRGYRMALMETGSMYQNAVLVADQIGLKNRVWAGYTDSYVAKTMNLDQRTVAPLIVQFFGDVNDDKCLQ.

The protein to R.leguminosarum TfxB which is involved in the processing of trifolitoxin.

The protein localises to the cytoplasm. Necessary to process the inactive microcin B17 (McbA) precursor into the active peptide. This chain is Microcin B17-processing protein McbC (mcbC), found in Escherichia coli.